The chain runs to 238 residues: MSKVSKAYREAAAKVDRDNKYTPLQAAKLAKATSSKNYDATIDVAIRLGVDPRKADQLVRGTVALPNGTGKDVRVVVFAEGPNATAAEEAGADFVGSAELIEKIQGGWTDFDAAIATPDQMAKVGRVARVLGPRGLMPNPKTGTVTTDVAKAVSEIKGGKISFRVDKASNLHALIGKASFDEKKLAENYGALIDELLRIKPSSSKGKYIKKVTLSSTNGPGVPVDETIQKNYADDAEA.

The segment at 217 to 238 (TNGPGVPVDETIQKNYADDAEA) is disordered.

Belongs to the universal ribosomal protein uL1 family. In terms of assembly, part of the 50S ribosomal subunit.

Its function is as follows. Binds directly to 23S rRNA. The L1 stalk is quite mobile in the ribosome, and is involved in E site tRNA release. In terms of biological role, protein L1 is also a translational repressor protein, it controls the translation of the L11 operon by binding to its mRNA. This chain is Large ribosomal subunit protein uL1, found in Corynebacterium urealyticum (strain ATCC 43042 / DSM 7109).